Consider the following 344-residue polypeptide: Cell division protein ZipA (344 aa).

The Periplasmic portion of the chain corresponds to 1 to 6; it reads MEDLQL. Residues 7–27 traverse the membrane as a helical segment; it reads VLFVLGAIAIVAVLVHGFWSI. Residues 28–344 lie on the Cytoplasmic side of the membrane; sequence RRQQPKSLKD…DYLHRIRANA (317 aa). 2 disordered regions span residues 75-94 and 108-139; these read VRKASESQTPEAPAVNPYLK and QFKQEPSMAQPDFSLQSPSVDEPHRGTKASRQ.

Belongs to the ZipA family. Interacts with FtsZ via their C-terminal domains.

The protein localises to the cell inner membrane. Its function is as follows. Essential cell division protein that stabilizes the FtsZ protofilaments by cross-linking them and that serves as a cytoplasmic membrane anchor for the Z ring. Also required for the recruitment to the septal ring of downstream cell division proteins. In Shewanella oneidensis (strain ATCC 700550 / JCM 31522 / CIP 106686 / LMG 19005 / NCIMB 14063 / MR-1), this protein is Cell division protein ZipA.